Reading from the N-terminus, the 20-residue chain is Thylakoid lumenal 14.7 kDa protein (20 aa).

Residues 1–20 (KTGVNKPELLPKEETTVIDV) are disordered. Basic and acidic residues predominate over residues 9-20 (LLPKEETTVIDV).

The protein resides in the plastid. Its subcellular location is the chloroplast thylakoid lumen. This is Thylakoid lumenal 14.7 kDa protein from Spinacia oleracea (Spinach).